The chain runs to 122 residues: Large ribosomal subunit protein uL14 (122 aa).

Belongs to the universal ribosomal protein uL14 family. In terms of assembly, part of the 50S ribosomal subunit. Forms a cluster with proteins L3 and L19. In the 70S ribosome, L14 and L19 interact and together make contacts with the 16S rRNA in bridges B5 and B8.

In terms of biological role, binds to 23S rRNA. Forms part of two intersubunit bridges in the 70S ribosome. The polypeptide is Large ribosomal subunit protein uL14 (Nautilia profundicola (strain ATCC BAA-1463 / DSM 18972 / AmH)).